The sequence spans 207 residues: Cytochrome c biogenesis ATP-binding export protein CcmA (207 aa).

An ABC transporter domain is found at 4–207 (LEVRELLCER…RISLTQTRAV (204 aa)). Residue 36 to 43 (GSNGAGKT) coordinates ATP.

Belongs to the ABC transporter superfamily. CcmA exporter (TC 3.A.1.107) family. The complex is composed of two ATP-binding proteins (CcmA) and two transmembrane proteins (CcmB).

Its subcellular location is the cell inner membrane. The enzyme catalyses heme b(in) + ATP + H2O = heme b(out) + ADP + phosphate + H(+). Functionally, part of the ABC transporter complex CcmAB involved in the biogenesis of c-type cytochromes; once thought to export heme, this seems not to be the case, but its exact role is uncertain. Responsible for energy coupling to the transport system. This is Cytochrome c biogenesis ATP-binding export protein CcmA from Escherichia coli O157:H7.